Here is a 209-residue protein sequence, read N- to C-terminus: Uracil phosphoribosyltransferase (209 aa).

5-phospho-alpha-D-ribose 1-diphosphate contacts are provided by residues arginine 79, arginine 104, and 131–139; that span reads DPMLATGNS. Uracil-binding positions include isoleucine 194 and 199–201; that span reads GDA. Position 200 (aspartate 200) interacts with 5-phospho-alpha-D-ribose 1-diphosphate.

It belongs to the UPRTase family. Mg(2+) serves as cofactor.

It carries out the reaction UMP + diphosphate = 5-phospho-alpha-D-ribose 1-diphosphate + uracil. It functions in the pathway pyrimidine metabolism; UMP biosynthesis via salvage pathway; UMP from uracil: step 1/1. With respect to regulation, allosterically activated by GTP. Functionally, catalyzes the conversion of uracil and 5-phospho-alpha-D-ribose 1-diphosphate (PRPP) to UMP and diphosphate. The protein is Uracil phosphoribosyltransferase of Sinorhizobium fredii (strain NBRC 101917 / NGR234).